Consider the following 411-residue polypeptide: Phosphoribosylaminoimidazole-succinocarboxamide synthase, chloroplastic (411 aa).

The transit peptide at 1 to 53 (MAQCVRSTLNPVRTPQSFTRKAYVKSPAFASVSFLRAVPEFNKYPKPCSLVMS) directs the protein to the chloroplast.

This sequence belongs to the SAICAR synthetase family.

It is found in the plastid. It localises to the chloroplast. The enzyme catalyses 5-amino-1-(5-phospho-D-ribosyl)imidazole-4-carboxylate + L-aspartate + ATP = (2S)-2-[5-amino-1-(5-phospho-beta-D-ribosyl)imidazole-4-carboxamido]succinate + ADP + phosphate + 2 H(+). Its pathway is purine metabolism; IMP biosynthesis via de novo pathway; 5-amino-1-(5-phospho-D-ribosyl)imidazole-4-carboxamide from 5-amino-1-(5-phospho-D-ribosyl)imidazole-4-carboxylate: step 1/2. The polypeptide is Phosphoribosylaminoimidazole-succinocarboxamide synthase, chloroplastic (PUR7) (Arabidopsis thaliana (Mouse-ear cress)).